A 3036-amino-acid polypeptide reads, in one-letter code: DmX-like protein 2 (3036 aa).

3 WD repeats span residues Phe-108–Glu-145, Lys-167–Ile-207, and Ala-230–Leu-278. Residue Ser-326 is modified to Phosphoserine. Residues Lys-417–Leu-480 are disordered. Residues Glu-422–Ser-434 show a composition bias toward acidic residues. The segment covering Gln-435 to Ser-473 has biased composition (basic and acidic residues). A Phosphoserine modification is found at Ser-473. A WD 4 repeat occupies Asp-492–Pro-532. Ser-588 is modified (phosphoserine). WD repeat units follow at residues His-595–Phe-634, Leu-751–Leu-803, and Gln-878–Cys-920. The interval Ser-932 to Ser-959 is disordered. Phosphoserine is present on residues Ser-944 and Ser-945. A compositionally biased stretch (low complexity) spans Ser-949–Ser-959. One copy of the WD 8 repeat lies at Leu-1000–Cys-1037. Residues Ser-1140, Ser-1143, and Ser-1151 each carry the phosphoserine modification. WD repeat units follow at residues Pro-1163–Gln-1204 and Gly-1244–Gly-1281. Residues Ser-1287 and Ser-1400 each carry the phosphoserine modification. Thr-1417 carries the phosphothreonine modification. Position 1857 is a phosphoserine (Ser-1857). Residues Ile-1927–Ser-1936 are compositionally biased toward basic and acidic residues. A disordered region spans residues Ile-1927 to Trp-1952. Phosphoserine is present on Ser-1984. The tract at residues Lys-1999–Thr-2033 is disordered. Over residues Thr-2001–Ala-2014 the composition is skewed to basic and acidic residues. Thr-2022 bears the Phosphothreonine mark. Over residues Gln-2024–Thr-2033 the composition is skewed to acidic residues. A coiled-coil region spans residues Gly-2122–Asp-2153. Phosphoserine occurs at positions 2399 and 2640. WD repeat units lie at residues Arg-2761 to Cys-2800, Ala-2804 to Lys-2843, Cys-2850 to Leu-2892, Cys-2898 to Thr-2937, Ala-2940 to Ser-2979, and Asn-2992 to Asn-3030.

In terms of assembly, interacts with MADD and RAB3GAP.

The protein localises to the cytoplasmic vesicle. It localises to the secretory vesicle. The protein resides in the synaptic vesicle membrane. It is found in the neuronal dense core vesicle. In terms of biological role, may serve as a scaffold protein for MADD and RAB3GA on synaptic vesicles. Plays a role in the brain as a key controller of neuronal and endocrine homeostatic processes. The chain is DmX-like protein 2 (DMXL2) from Homo sapiens (Human).